A 211-amino-acid chain; its full sequence is Large ribosomal subunit protein uL4 (211 aa).

Residues 44–90 (ERQGTHSTLTKGEVRGGGKKPWRQKHTGKARTGSTRNPHWTGGGVVF) form a disordered region. The segment covering 60 to 72 (GGKKPWRQKHTGK) has biased composition (basic residues).

Belongs to the universal ribosomal protein uL4 family. Part of the 50S ribosomal subunit.

In terms of biological role, one of the primary rRNA binding proteins, this protein initially binds near the 5'-end of the 23S rRNA. It is important during the early stages of 50S assembly. It makes multiple contacts with different domains of the 23S rRNA in the assembled 50S subunit and ribosome. Forms part of the polypeptide exit tunnel. This chain is Large ribosomal subunit protein uL4, found in Ureaplasma parvum serovar 3 (strain ATCC 27815 / 27 / NCTC 11736).